A 533-amino-acid chain; its full sequence is NAD(P)H-quinone oxidoreductase chain 4 (533 aa).

The next 15 membrane-spanning stretches (helical) occupy residues 5–25 (VPWL…VPLV), 36–56 (WYAL…YLTG), 70–90 (VSWL…LSMP), 91–111 (LILL…PVSF), 115–135 (LFYF…AVQD), 137–157 (LLFF…LAIW), 169–189 (FILY…AMGF), 210–230 (GFQL…LPIV), 244–264 (TAPV…YALL), 278–298 (FAPL…LTSF), 315–335 (MGFV…GAML), 336–356 (QMIS…ATYD), 377–397 (FALW…SGFV), 418–438 (VVIC…LLSM), and 465–485 (VYII…PKLM).

This sequence belongs to the complex I subunit 4 family.

It is found in the cellular thylakoid membrane. The enzyme catalyses a plastoquinone + NADH + (n+1) H(+)(in) = a plastoquinol + NAD(+) + n H(+)(out). It carries out the reaction a plastoquinone + NADPH + (n+1) H(+)(in) = a plastoquinol + NADP(+) + n H(+)(out). Its function is as follows. NDH-1 shuttles electrons from NAD(P)H, via FMN and iron-sulfur (Fe-S) centers, to quinones in the respiratory chain. The immediate electron acceptor for the enzyme in this species is believed to be plastoquinone. Couples the redox reaction to proton translocation (for every two electrons transferred, four hydrogen ions are translocated across the cytoplasmic membrane), and thus conserves the redox energy in a proton gradient. This Synechococcus sp. (strain CC9605) protein is NAD(P)H-quinone oxidoreductase chain 4.